A 56-amino-acid polypeptide reads, in one-letter code: Large ribosomal subunit protein bL33A (56 aa).

It belongs to the bacterial ribosomal protein bL33 family.

This Sorangium cellulosum (strain So ce56) (Polyangium cellulosum (strain So ce56)) protein is Large ribosomal subunit protein bL33A.